Consider the following 622-residue polypeptide: Chaperone protein HscA homolog (622 aa).

The protein belongs to the heat shock protein 70 family.

Chaperone involved in the maturation of iron-sulfur cluster-containing proteins. Has a low intrinsic ATPase activity which is markedly stimulated by HscB. The protein is Chaperone protein HscA homolog of Azoarcus sp. (strain BH72).